The primary structure comprises 211 residues: Large ribosomal subunit protein uL3 (211 aa).

Gln-150 carries the N5-methylglutamine modification.

Belongs to the universal ribosomal protein uL3 family. As to quaternary structure, part of the 50S ribosomal subunit. Forms a cluster with proteins L14 and L19. In terms of processing, methylated by PrmB.

Its function is as follows. One of the primary rRNA binding proteins, it binds directly near the 3'-end of the 23S rRNA, where it nucleates assembly of the 50S subunit. The protein is Large ribosomal subunit protein uL3 of Pseudomonas syringae pv. syringae (strain B728a).